Consider the following 122-residue polypeptide: Alkaline proteinase inhibitor (122 aa).

An N-terminal signal peptide occupies residues 1-25; the sequence is MPRFSHLIGCVWQVLFVSAGAQAMA. The interval 101–122 is disordered; that stretch reads QKEGEYTGRTPSGADVTLQRTN.

Belongs to the protease inhibitor I38 family.

The protein resides in the periplasm. Its function is as follows. Inhibitor of the alkaline protease. This Pseudomonas tolaasii protein is Alkaline proteinase inhibitor (inh).